The sequence spans 85 residues: Putative membrane protein insertion efficiency factor (85 aa).

Positions 66-85 (PLNSGGDDPVPPKLDDNREH) are disordered.

This sequence belongs to the UPF0161 family.

The protein resides in the cell inner membrane. Its function is as follows. Could be involved in insertion of integral membrane proteins into the membrane. The sequence is that of Putative membrane protein insertion efficiency factor from Yersinia pestis bv. Antiqua (strain Antiqua).